Consider the following 689-residue polypeptide: Bifunctional protein GAL10 (689 aa).

Residues 1–345 (MSYILVTGGA…TTKNPFGFQI (345 aa)) are galactowaldenase. 3–34 (YILVTGGAGYIGSHTVVELVNNGYNVVVVDNL) serves as a coordination point for NAD(+). The segment at 346–689 (NNYSWTKFDS…SYTIYRFENF (344 aa)) is mutarotase. His-534 (for mutarotase activity) is an active-site residue.

In the N-terminal section; belongs to the NAD(P)-dependent epimerase/dehydratase family. It in the C-terminal section; belongs to the aldose epimerase family. NAD(+) is required as a cofactor.

It catalyses the reaction UDP-alpha-D-glucose = UDP-alpha-D-galactose. The enzyme catalyses alpha-D-glucose = beta-D-glucose. The protein operates within carbohydrate metabolism; galactose metabolism. It functions in the pathway carbohydrate metabolism; hexose metabolism. Functionally, mutarotase converts alpha-aldose to the beta-anomer. It is active on D-glucose, L-arabinose, D-xylose, D-galactose, maltose and lactose. The polypeptide is Bifunctional protein GAL10 (GAL10) (Pachysolen tannophilus (Yeast)).